Reading from the N-terminus, the 394-residue chain is Fatty acid resistance protein FarA (394 aa).

Residues 1–23 form a disordered region; sequence MKSGNSEPNLMETHTDETKLQNT. Residues 33–53 traverse the membrane as a helical segment; it reads ALTLLFALSAAAAGSAFFLWW. The interval 356–376 is disordered; that stretch reads SAAGAPVSKTPGAALPEMEST.

Belongs to the membrane fusion protein (MFP) (TC 8.A.1) family. As to quaternary structure, probably part of a tripartite efflux system FarAB-MtrE, which is composed of an inner membrane transporter, FarB, a periplasmic membrane fusion protein, FarA, and an outer membrane component, MtrE.

Its subcellular location is the cell inner membrane. In terms of biological role, mediates resistance to long-chained antibacterial fatty acids (FAs). Function is dependent on the MtrE outer membrane protein. The chain is Fatty acid resistance protein FarA from Neisseria gonorrhoeae.